We begin with the raw amino-acid sequence, 483 residues long: MEGGLDTDASVHNNPLLQLDYEPAFASLGDDYYDLVAAAPFPEHRLRFRGDGVLRLLGLDPATVGEEHFIEAFGRFAGRGPFLAMRYHGYQFGEYNPYLGDGRGFLYGQVRGLDGELYDFGTKGSGTTPYSRGGDGRLTLKGGVREVLASEALHHLGVRTSRSLSLIETGEALWRGDEPSPTRSAVLVRTSRSHVRFGTFERLHHFKRKDLIQKLLDYVIAVYYPHYGAEPERYALFYRELVGRTAELAAQWMAVGFTHAVLNTDNMSITAESFDYGPYAFIDRFDPGFTAAYFDHYGRYSYGNQPLVCRINLEALQLPLSMVIPIADLEAGLAIFDTHYAAHYTARMLAKLGFGALGPVLGPELVKATLNYLEAAQAGYHGFFQALAASFDRSWQSDQGAIPAPVVGAPEAFELWRESYFRALASLSDSELLRVGERLNRHNPTTVLLRPAIEAVWAAIDQNDDWQPFYDLIGRLRKPYAIA.

ATP contacts are provided by glycine 100, glycine 102, arginine 103, lysine 123, aspartate 135, glycine 136, arginine 189, and arginine 196. Catalysis depends on aspartate 265, which acts as the Proton acceptor. Residues asparagine 266 and aspartate 275 each coordinate Mg(2+). Residue aspartate 275 coordinates ATP.

This sequence belongs to the SELO family. Mg(2+) serves as cofactor. Mn(2+) is required as a cofactor.

The catalysed reaction is L-seryl-[protein] + ATP = 3-O-(5'-adenylyl)-L-seryl-[protein] + diphosphate. It carries out the reaction L-threonyl-[protein] + ATP = 3-O-(5'-adenylyl)-L-threonyl-[protein] + diphosphate. It catalyses the reaction L-tyrosyl-[protein] + ATP = O-(5'-adenylyl)-L-tyrosyl-[protein] + diphosphate. The enzyme catalyses L-histidyl-[protein] + UTP = N(tele)-(5'-uridylyl)-L-histidyl-[protein] + diphosphate. The catalysed reaction is L-seryl-[protein] + UTP = O-(5'-uridylyl)-L-seryl-[protein] + diphosphate. It carries out the reaction L-tyrosyl-[protein] + UTP = O-(5'-uridylyl)-L-tyrosyl-[protein] + diphosphate. Functionally, nucleotidyltransferase involved in the post-translational modification of proteins. It can catalyze the addition of adenosine monophosphate (AMP) or uridine monophosphate (UMP) to a protein, resulting in modifications known as AMPylation and UMPylation. The polypeptide is Protein nucleotidyltransferase YdiU (Gloeobacter violaceus (strain ATCC 29082 / PCC 7421)).